Here is a 147-residue protein sequence, read N- to C-terminus: CRISP-1 (147 aa).

It belongs to the CRISP family. Expressed by the venom gland.

Its subcellular location is the secreted. This chain is CRISP-1, found in Phoneutria keyserlingi (Brazilian wandering spider).